The sequence spans 469 residues: Deoxyribodipyrimidine photo-lyase (469 aa).

Residues 1 to 133 (MRLVWFRRDL…IWSAFDDKCV (133 aa)) form the Photolyase/cryptochrome alpha/beta domain. Glu107 is a binding site for (6R)-5,10-methylene-5,6,7,8-tetrahydrofolate.

The protein belongs to the DNA photolyase class-1 family. In terms of assembly, monomer. Requires FAD as cofactor. (6R)-5,10-methylene-5,6,7,8-tetrahydrofolate serves as cofactor.

It catalyses the reaction cyclobutadipyrimidine (in DNA) = 2 pyrimidine residues (in DNA).. Functionally, involved in repair of UV radiation-induced DNA damage. Catalyzes the light-dependent monomerization (300-600 nm) of cyclobutyl pyrimidine dimers (in cis-syn configuration), which are formed between adjacent bases on the same DNA strand upon exposure to ultraviolet radiation. In Vibrio cholerae serotype O1 (strain ATCC 39315 / El Tor Inaba N16961), this protein is Deoxyribodipyrimidine photo-lyase (phrA).